We begin with the raw amino-acid sequence, 440 residues long: Xylose isomerase (440 aa).

Catalysis depends on residues His-101 and Asp-104. Glu-232, Glu-268, His-271, Asp-296, Asp-307, Asp-309, and Asp-339 together coordinate Mg(2+).

Belongs to the xylose isomerase family. As to quaternary structure, homotetramer. Requires Mg(2+) as cofactor.

It localises to the cytoplasm. The catalysed reaction is alpha-D-xylose = alpha-D-xylulofuranose. The protein is Xylose isomerase of Escherichia coli (strain SMS-3-5 / SECEC).